A 114-amino-acid polypeptide reads, in one-letter code: Nucleoid-associated protein Tlet_0999 (114 aa).

Belongs to the YbaB/EbfC family. Homodimer.

The protein localises to the cytoplasm. The protein resides in the nucleoid. In terms of biological role, binds to DNA and alters its conformation. May be involved in regulation of gene expression, nucleoid organization and DNA protection. The chain is Nucleoid-associated protein Tlet_0999 from Pseudothermotoga lettingae (strain ATCC BAA-301 / DSM 14385 / NBRC 107922 / TMO) (Thermotoga lettingae).